Reading from the N-terminus, the 122-residue chain is Large ribosomal subunit protein uL18 (122 aa).

A compositionally biased stretch (basic residues) spans 1–19 (MTKLSRKLQTQKRHRRLRR). Residues 1-21 (MTKLSRKLQTQKRHRRLRRSV) are disordered.

This sequence belongs to the universal ribosomal protein uL18 family. Part of the 50S ribosomal subunit; part of the 5S rRNA/L5/L18/L25 subcomplex. Contacts the 5S and 23S rRNAs.

This is one of the proteins that bind and probably mediate the attachment of the 5S RNA into the large ribosomal subunit, where it forms part of the central protuberance. The sequence is that of Large ribosomal subunit protein uL18 from Prochlorococcus marinus (strain MIT 9312).